A 446-amino-acid chain; its full sequence is MSDYLSVTSLTKYLKMKFDRDPYLERVYLTGQVSNYRRRPSHQYFSLKDEGAVIQATIWAGVFKKIGFDLEEGMKINVVGRVQIYEPSGSYSLIIEKAEPDGIGALALQFEQLRKKLTAEGYFDDRHKQPLPNFVKKIGVITSPSGAVIRDIITTVSRRFPGVEILLFPTKVQGDGAAQEIVENIQKANQREDLDLLIVGRGGGSIEDLWAFNEEIVVQSIFESRLPVISSVGHETDTTLADFVADRRAATPTAAAELATPISKADTLAWIRERQNRAYQACLRRIQYNQERLAKLSQSVVFRQPERLYDGYLQKLDRLTTRLETFMSQDFERKQKSAEFLRQRLHGLNLSTRVKNYQDRRESLQRLLVTTTKNTINGNRVRLEKAQDALLSLDTSRIVARGYAIVNKNDKPLTTIKDITEGEQLTIQMRDGQLEVEVKNVNEKNI.

It belongs to the XseA family. In terms of assembly, heterooligomer composed of large and small subunits.

The protein resides in the cytoplasm. The enzyme catalyses Exonucleolytic cleavage in either 5'- to 3'- or 3'- to 5'-direction to yield nucleoside 5'-phosphates.. Bidirectionally degrades single-stranded DNA into large acid-insoluble oligonucleotides, which are then degraded further into small acid-soluble oligonucleotides. The chain is Exodeoxyribonuclease 7 large subunit from Streptococcus thermophilus (strain ATCC BAA-250 / LMG 18311).